Reading from the N-terminus, the 106-residue chain is Iron-sulfur cluster assembly protein CyaY (106 aa).

It belongs to the frataxin family.

Involved in iron-sulfur (Fe-S) cluster assembly. May act as a regulator of Fe-S biogenesis. This chain is Iron-sulfur cluster assembly protein CyaY, found in Shigella flexneri serotype 5b (strain 8401).